The sequence spans 340 residues: PRKC apoptosis WT1 regulator protein (340 aa).

Residues 1–18 are compositionally biased toward polar residues; it reads MATGGYRTSSGLGGSTTD. Positions 1-253 are disordered; sequence MATGGYRTSS…TDRSGFPRYN (253 aa). Over residues 47–82 the composition is skewed to low complexity; that stretch reads SDAAGKPPAGALGTPAAAAANELNNNLPGGAPAAPA. A B30.2/SPRY domain-binding motif motif is present at residues 68 to 72; the sequence is ELNNN. The residue at position 108 (serine 108) is a Phosphoserine. Residues 145-161 carry the Nuclear localization signal motif; sequence RKGKGQIEKRKLREKRR. The selective for apoptosis induction in cancer cells (SAC) stretch occupies residues 145–203; the sequence is RKGKGQIEKRKLREKRRSTGVVNIPAAECLDEYEDDEAGQKERKREDAITQQNTIQNEA. Threonine 163 is subject to Phosphothreonine; by PKA. Over residues 182 to 192 the composition is skewed to basic and acidic residues; that stretch reads AGQKERKREDA. Residues 186–206 adopt a coiled-coil conformation; sequence ERKREDAITQQNTIQNEAVNL. A compositionally biased stretch (polar residues) spans 193–203; the sequence is ITQQNTIQNEA. Position 231 is a phosphoserine (serine 231). The span at 242–253 shows a compositional bias: basic and acidic residues; sequence SRTDRSGFPRYN. The segment at 300–340 is leucine-zipper; the sequence is IGKLKEEIDLLNRDLDDIEDENEQLKQENKTLLKVVGQLTR.

Homooligomer. Interacts (via the C-terminal region) with WT1. Interacts with THAP1. Interacts with AATF. Interacts with BACE1. Interacts with SPSB1 (via B30.2/SPRY domain); this interaction is direct and occurs in association with the Elongin BC complex. Interacts with SPSB2 (via B30.2/SPRY domain); this interaction occurs in association with the Elongin BC complex. Interacts with SPSB4 (via B30.2/SPRY domain); this interaction occurs in association with the Elongin BC complex. Component of a ternary complex composed of SQSTM1 and PRKCZ. Interacts with actin. In terms of processing, preferentially phosphorylated at the Thr-163 by PKC in cancer cells. Widely expressed. Expression is elevated in various neurodegenerative diseases such as amyotrophic lateral sclerosis, Alzheimer, Parkinson and Huntington diseases and stroke. Down-regulated in several cancers.

Its subcellular location is the cytoplasm. It is found in the nucleus. In terms of biological role, pro-apoptotic protein capable of selectively inducing apoptosis in cancer cells, sensitizing the cells to diverse apoptotic stimuli and causing regression of tumors in animal models. Induces apoptosis in certain cancer cells by activation of the Fas prodeath pathway and coparallel inhibition of NF-kappa-B transcriptional activity. Inhibits the transcriptional activation and augments the transcriptional repression mediated by WT1. Down-regulates the anti-apoptotic protein BCL2 via its interaction with WT1. Also seems to be a transcriptional repressor by itself. May be directly involved in regulating the amyloid precursor protein (APP) cleavage activity of BACE1. The sequence is that of PRKC apoptosis WT1 regulator protein (PAWR) from Homo sapiens (Human).